A 134-amino-acid chain; its full sequence is Small ribosomal subunit protein bS6 (134 aa).

The segment at 103–134 (AAPVKSAEEGTEEVAAEAATEAPAETTTTVEG) is disordered. Residues 118–134 (AEAATEAPAETTTTVEG) show a composition bias toward low complexity.

It belongs to the bacterial ribosomal protein bS6 family.

Binds together with bS18 to 16S ribosomal RNA. This chain is Small ribosomal subunit protein bS6, found in Citrifermentans bemidjiense (strain ATCC BAA-1014 / DSM 16622 / JCM 12645 / Bem) (Geobacter bemidjiensis).